The sequence spans 367 residues: Inhibin alpha chain (367 aa).

The N-terminal stretch at 1-20 is a signal peptide; it reads MVPPLPLLLLLLLVPQGGHG. Positions 21–63 are excised as a propeptide; it reads CQGSELDREIVLAKVRALFLDALGPPAVTGEGGDPGVRRLPRR. A propeptide spans 64–233 (inhibin alpha N-terminal region); sequence HALGGFARRG…PPSGGERTRR (170 aa). N-linked (GlcNAc...) asparagine glycosylation is found at Asn-147 and Asn-269. Intrachain disulfides connect Cys-263/Cys-329, Cys-292/Cys-364, and Cys-296/Cys-366.

The protein belongs to the TGF-beta family. As to quaternary structure, dimeric, linked by one or more disulfide bonds. Activin B is a dimer of alpha and beta-B. Inhibin A is a dimer of alpha and beta-A. Inhibin B is a dimer of alpha and beta-B. Interacts with TGFBR3L; this interaction regulates female fertility. Post-translationally, proteolytic processing yields a number of bioactive forms, consisting either solely of the mature alpha chain, of the most N-terminal propeptide linked through a disulfide bond to the mature alpha chain, or of the entire proprotein.

The protein resides in the secreted. Functionally, inhibins and activins inhibit and activate, respectively, the secretion of follitropin by the pituitary gland. Inhibins/activins are involved in regulating a number of diverse functions such as hypothalamic and pituitary hormone secretion, gonadal hormone secretion, germ cell development and maturation, erythroid differentiation, insulin secretion, nerve cell survival, embryonic axial development or bone growth, depending on their subunit composition. Inhibins appear to oppose the functions of activins. In terms of biological role, inhibin A is a dimer of alpha/INHA and beta-A/INHBA that functions as a feedback regulator in the hypothalamic-pituitary-gonadal (HPG) axis. Inhibits the secretion of FSH from the anterior pituitary gland by acting on pituitary gonadotrope cells. Antagonizes activin A by binding to the proteoglycan, betaglycan, and forming a stable complex with and, thereby, sequestering type II activin receptors while excluding type I receptor. Inhibin B is a dimer of alpha and beta-B that plays a crucial role in the regulation of the reproductive system by inhibiting the secretion of follicle-stimulating hormone (FSH) from the anterior pituitary gland. Thereby, maintains reproductive homeostasis in both males and females. Acts as a more potent suppressor of FSH release than inhibin A. Functions as competitive receptor antagonist binding activin type II receptors with high affinity in the presence of the TGF-beta type III coreceptor/TGFBR3L. In Equus caballus (Horse), this protein is Inhibin alpha chain (INHA).